The sequence spans 495 residues: ATP-dependent RNA helicase dbp3 (495 aa).

The span at 1 to 14 shows a compositional bias: basic and acidic residues; sequence MAKRELQDKGSTEH. The tract at residues 1–49 is disordered; it reads MAKRELQDKGSTEHRAKKKSRNEKHTKKAEDSQASAQSSETQYTDPKEP. Residues 15–27 show a composition bias toward basic residues; the sequence is RAKKKSRNEKHTK. Positions 97–105 match the Q motif motif; it reads SFTSPTAIQ. In terms of domain architecture, Helicase ATP-binding spans 109-284; sequence WPFLFSGRDV…ATFMTSPVTV (176 aa). Residue 122 to 129 coordinates ATP; the sequence is AETGSGKT. The DEAD box signature appears at 231 to 234; the sequence is DEAD. The region spanning 315–464 is the Helicase C-terminal domain; it reads RLVQLLNKYQ…DVPEDLLKFG (150 aa).

It belongs to the DEAD box helicase family. DDX5/DBP2 subfamily.

The protein localises to the nucleus. Its subcellular location is the nucleolus. The catalysed reaction is ATP + H2O = ADP + phosphate + H(+). ATP-dependent RNA helicase required for 60S ribosomal subunit synthesis. Involved in efficient pre-rRNA processing, predominantly at site A3, which is necessary for the normal formation of 25S and 5.8S rRNAs. This Aspergillus niger (strain ATCC MYA-4892 / CBS 513.88 / FGSC A1513) protein is ATP-dependent RNA helicase dbp3 (dbp3).